The chain runs to 539 residues: Glycerophosphoinositol inositolphosphodiesterase GDPD2 (539 aa).

The Cytoplasmic portion of the chain corresponds to 1 to 40; that stretch reads MADSPGCCSIWARCLHCLYSCHWRKYPKQKMQTSKCDCIW. The helical transmembrane segment at 41-61 threads the bilayer; the sequence is FGLLFLTFLLSLGWLYIGLIL. Over 62–83 the chain is Extracellular; that stretch reads LNDLHNFNEFLFRHWGHWMDWS. A helical transmembrane segment spans residues 84-104; that stretch reads LIVLLVVSLLVTYASLLLLLG. At 105–121 the chain is on the cytoplasmic side; that stretch reads LLLQLCGQPLHLHSLHK. Residues 122 to 142 traverse the membrane as a helical segment; sequence VLLLLIVLLVAAGLVGLDIQW. Residues 143–154 are Extracellular-facing; sequence RQEWHSLRLSLQ. The chain crosses the membrane as a helical span at residues 155-175; it reads ATAPFLHIGAVAGITLLAWPV. Residues 176–189 are Cytoplasmic-facing; sequence ADTFYRIHPRGPKV. Residues 190–210 traverse the membrane as a helical segment; that stretch reads LLLLLFFGVTLVIYLMPLLFI. The Extracellular portion of the chain corresponds to 211-491; it reads SSPCIMKLRD…PLWLLPPQKY (281 aa). A GP-PDE domain is found at 225 to 480; it reads PGLVGHRGAP…NACQLLQQMQ (256 aa). Glu257, Asp259, and His272 together coordinate a divalent metal cation. N-linked (GlcNAc...) asparagine glycosylation occurs at Asn333. Residues 492 to 512 traverse the membrane as a helical segment; sequence LMIWVITDCASILLLLSIFLL. Residues 513 to 539 are Cytoplasmic-facing; the sequence is RGGCAKRNRTGLETAVLLTKINNFASE.

It belongs to the glycerophosphoryl diester phosphodiesterase family. The cofactor is Ca(2+). Detected in spleen, femur and calvaria.

It localises to the cell membrane. The protein resides in the cytoplasm. The protein localises to the cytoskeleton. The catalysed reaction is sn-glycero-3-phospho-1D-myo-inositol + H2O = 1D-myo-inositol 1-phosphate + glycerol + H(+). Its function is as follows. Has glycerophosphoinositol inositolphosphodiesterase activity and specifically hydrolyzes glycerophosphoinositol, with no activity for other substrates such as glycerophosphoinositol 4-phosphate, glycerophosphocholine, glycerophosphoethanolamine, and glycerophosphoserine. Accelerates the program of osteoblast differentiation and growth. May play a role in remodeling of the actin cytoskeleton. The sequence is that of Glycerophosphoinositol inositolphosphodiesterase GDPD2 (Gdpd2) from Mus musculus (Mouse).